Consider the following 124-residue polypeptide: Heat-labile enterotoxin B chain (124 aa).

Residues 1-21 (MNKVKCYVLFTALLSSLCAYG) form the signal peptide. Cysteines 30 and 107 form a disulfide.

Heterohexamer of one A chain and of five B chains.

Functionally, the biological activity of the toxin is produced by the A chain, which activates intracellular adenyl cyclase. This Escherichia coli O78:H11 (strain H10407 / ETEC) protein is Heat-labile enterotoxin B chain (eltB).